Reading from the N-terminus, the 235-residue chain is Orotidine 5'-phosphate decarboxylase (235 aa).

Residues Asp-12, Lys-34, 61–70, Thr-121, Arg-182, Gln-191, Gly-211, and Arg-212 contribute to the substrate site; that span reads DLKFHDIPNT. Catalysis depends on Lys-63, which acts as the Proton donor.

The protein belongs to the OMP decarboxylase family. Type 1 subfamily. As to quaternary structure, homodimer.

It carries out the reaction orotidine 5'-phosphate + H(+) = UMP + CO2. It participates in pyrimidine metabolism; UMP biosynthesis via de novo pathway; UMP from orotate: step 2/2. In terms of biological role, catalyzes the decarboxylation of orotidine 5'-monophosphate (OMP) to uridine 5'-monophosphate (UMP). This chain is Orotidine 5'-phosphate decarboxylase, found in Marinomonas sp. (strain MWYL1).